The following is an 807-amino-acid chain: Dual specificity protein phosphatase PPS1 (807 aa).

The 199-residue stretch at 585-783 (LPSRILRHLY…LFKWWKKHYN (199 aa)) folds into the Tyrosine-protein phosphatase domain. A catalytic region spans residues 593–807 (LYLGSLDHAQ…GIAEVNMKYT (215 aa)). Residue cysteine 725 is the Phosphocysteine intermediate of the active site.

Belongs to the protein-tyrosine phosphatase family. Non-receptor class dual specificity subfamily.

The enzyme catalyses O-phospho-L-tyrosyl-[protein] + H2O = L-tyrosyl-[protein] + phosphate. The catalysed reaction is O-phospho-L-seryl-[protein] + H2O = L-seryl-[protein] + phosphate. It catalyses the reaction O-phospho-L-threonyl-[protein] + H2O = L-threonyl-[protein] + phosphate. Its function is as follows. Protein phosphatase with specificity for serine, threonine, and tyrosine residues; has a role in the DNA synthesis phase of the cell cycle. The chain is Dual specificity protein phosphatase PPS1 (PPS1) from Saccharomyces cerevisiae (strain ATCC 204508 / S288c) (Baker's yeast).